A 566-amino-acid polypeptide reads, in one-letter code: 3'-5' exoribonuclease parn-1 (566 aa).

The a divalent metal cation site is built by Asp-29, Glu-31, Asp-283, and Asp-379.

This sequence belongs to the CAF1 family. Requires a divalent metal cation as cofactor. Expressed in germline cells.

The protein resides in the cytoplasm. Its function is as follows. Involved in transcriptome surveillance. Required for piwi-interacting RNAs (piRNAs) 3'-end trimming, which is important for both fertility and piRNA-directed gene silencing. Has 3' to 5' exonuclease activity in vitro. The polypeptide is 3'-5' exoribonuclease parn-1 (Caenorhabditis elegans).